The sequence spans 311 residues: Dihydroorotate dehydrogenase B (NAD(+)), catalytic subunit (311 aa).

FMN is bound by residues serine 24 and lysine 48 to alanine 49. Residues lysine 48 and asparagine 72–leucine 76 each bind substrate. 2 residues coordinate FMN: asparagine 104 and asparagine 132. Asparagine 132 serves as a coordination point for substrate. Cysteine 135 serves as the catalytic Nucleophile. FMN-binding residues include lysine 170 and isoleucine 196. Residue asparagine 197–threonine 198 coordinates substrate. FMN-binding positions include glycine 222, glycine 248–glycine 249, and glycine 270–threonine 271.

This sequence belongs to the dihydroorotate dehydrogenase family. Type 1 subfamily. Heterotetramer of 2 PyrK and 2 PyrD type B subunits. The cofactor is FMN.

The protein localises to the cytoplasm. It carries out the reaction (S)-dihydroorotate + NAD(+) = orotate + NADH + H(+). The protein operates within pyrimidine metabolism; UMP biosynthesis via de novo pathway; orotate from (S)-dihydroorotate (NAD(+) route): step 1/1. Catalyzes the conversion of dihydroorotate to orotate with NAD(+) as electron acceptor. The chain is Dihydroorotate dehydrogenase B (NAD(+)), catalytic subunit (pyrDB) from Lactococcus lactis subsp. lactis (strain IL1403) (Streptococcus lactis).